Consider the following 293-residue polypeptide: Ribonuclease HIII (293 aa).

The 216-residue stretch at 78-293 (LPLIGTDEVG…TEKAKKRLER (216 aa)) folds into the RNase H type-2 domain. A divalent metal cation contacts are provided by Asp84, Glu85, and Asp187.

It belongs to the RNase HII family. RnhC subfamily. It depends on Mn(2+) as a cofactor. Requires Mg(2+) as cofactor.

The protein localises to the cytoplasm. The catalysed reaction is Endonucleolytic cleavage to 5'-phosphomonoester.. In terms of biological role, endonuclease that specifically degrades the RNA of RNA-DNA hybrids. This Streptococcus pneumoniae serotype 19F (strain G54) protein is Ribonuclease HIII.